Here is a 657-residue protein sequence, read N- to C-terminus: Katanin p80 WD40 repeat-containing subunit B1 (657 aa).

WD repeat units lie at residues 18 to 58 (AHSS…CVMS), 61 to 100 (GHTT…ILRT), 103 to 142 (GHKA…CIFK), 145 to 184 (SHTQ…VMFE), 187 to 226 (GHSG…VVSC), and 229 to 269 (EEAT…DVVV). Disordered regions lie at residues 318–410 (NNEL…EDEP) and 423–454 (VEVQ…RAEP). A compositionally biased stretch (polar residues) spans 325–345 (PTPTGSSLRRSYDRPSTSCSK). The segment covering 351–385 (HSSESERRSPSSEEDRDEKESKAEIQNPEDYKEIF) has biased composition (basic and acidic residues).

The protein belongs to the WD repeat KATNB1 family. In terms of assembly, interacts with KATNA1. This interaction enhances the microtubule binding and severing activity of KATNA1 and also targets this activity to the centrosome.

The protein localises to the cytoplasm. The protein resides in the cytoskeleton. It is found in the microtubule organizing center. It localises to the centrosome. Its subcellular location is the spindle pole. The protein localises to the spindle. Functionally, participates in a complex which severs microtubules in an ATP-dependent manner. May act to target the enzymatic subunit of this complex to sites of action such as the centrosome. Microtubule severing may promote rapid reorganization of cellular microtubule arrays and the release of microtubules from the centrosome following nucleation. This is Katanin p80 WD40 repeat-containing subunit B1 from Gallus gallus (Chicken).